Here is a 361-residue protein sequence, read N- to C-terminus: Peptide chain release factor 1 (361 aa).

Gln235 is subject to N5-methylglutamine. The disordered stretch occupies residues 288–307 (AAEAQTRKLQVGSGDRSQRI).

The protein belongs to the prokaryotic/mitochondrial release factor family. In terms of processing, methylated by PrmC. Methylation increases the termination efficiency of RF1.

It localises to the cytoplasm. Functionally, peptide chain release factor 1 directs the termination of translation in response to the peptide chain termination codons UAG and UAA. The chain is Peptide chain release factor 1 from Xanthomonas axonopodis pv. citri (strain 306).